Here is a 151-residue protein sequence, read N- to C-terminus: MATLEQNLQEMLQDAVKDLGCELWGIECQRVGRFMTVRLFIDKEGGVTVDDCADVSRQVSAILDVEDPIADKYNLEVSSPGLDRPLFTLPQFERYIGQDIAVHLRIPVMERRKWQGKLERIEKDMITLIVDDQEQILVFGNIQKANVVAKF.

This sequence belongs to the RimP family.

The protein resides in the cytoplasm. Its function is as follows. Required for maturation of 30S ribosomal subunits. The polypeptide is Ribosome maturation factor RimP (Haemophilus influenzae (strain 86-028NP)).